The following is a 210-amino-acid chain: MSAVRSKICGITRIEDALAAVEAGADAIGLVFYAKSPRSVNVLQARAIIAALPPFVTTVGLFVNASRCELNETLDAVPLDMLQFHGDETPDECESYQRPYIKALRVKSGDDIAAACAAYSGARGILLDTYVEGVPGGTGEAFDWSLIPPGLSKPIILAGGLTPTNVGAAIEQVQPYAVDVSGGVEQGKGIKDHSKIRAFMQAVRNSSGAM.

This sequence belongs to the TrpF family.

It catalyses the reaction N-(5-phospho-beta-D-ribosyl)anthranilate = 1-(2-carboxyphenylamino)-1-deoxy-D-ribulose 5-phosphate. It participates in amino-acid biosynthesis; L-tryptophan biosynthesis; L-tryptophan from chorismate: step 3/5. This chain is N-(5'-phosphoribosyl)anthranilate isomerase, found in Pseudomonas fluorescens (strain SBW25).